A 354-amino-acid polypeptide reads, in one-letter code: S-adenosylmethionine:tRNA ribosyltransferase-isomerase (354 aa).

It belongs to the QueA family. As to quaternary structure, monomer.

The protein resides in the cytoplasm. The enzyme catalyses 7-aminomethyl-7-carbaguanosine(34) in tRNA + S-adenosyl-L-methionine = epoxyqueuosine(34) in tRNA + adenine + L-methionine + 2 H(+). Its pathway is tRNA modification; tRNA-queuosine biosynthesis. Transfers and isomerizes the ribose moiety from AdoMet to the 7-aminomethyl group of 7-deazaguanine (preQ1-tRNA) to give epoxyqueuosine (oQ-tRNA). In Salmonella schwarzengrund (strain CVM19633), this protein is S-adenosylmethionine:tRNA ribosyltransferase-isomerase.